The following is a 452-amino-acid chain: Transcription factor ETV6 (452 aa).

Residues 1 to 10 (MSETPAQCSI) are compositionally biased toward polar residues. The interval 1–30 (MSETPAQCSIKQERISYTPPESPVPSYASS) is disordered. The residue at position 11 (Lys-11) is an N6-acetyllysine; alternate. Lys-11 is covalently cross-linked (Glycyl lysine isopeptide (Lys-Gly) (interchain with G-Cter in SUMO2); alternate). Residue Thr-18 is modified to Phosphothreonine. At Ser-22 the chain carries Phosphoserine. The PNT domain occupies 40 to 124 (ALRMEEDSIR…ELLQHILKQR (85 aa)). Residues 158-262 (VQRTPRPSVD…PKPSSPRQES (105 aa)) are disordered. 2 positions are modified to phosphoserine: Ser-213 and Ser-238. Positions 230-250 (QESYPLSVSPMENNHCPASSE) are enriched in polar residues. Position 257 is a phosphoserine; by MAPK14 (Ser-257). A Glycyl lysine isopeptide (Lys-Gly) (interchain with G-Cter in SUMO2) cross-link involves residue Lys-288. N6-acetyllysine; alternate is present on Lys-302. Residue Lys-302 forms a Glycyl lysine isopeptide (Lys-Gly) (interchain with G-Cter in SUMO2); alternate linkage. The residue at position 323 (Ser-323) is a Phosphoserine. Residues 339 to 420 (RLLWDYVYQL…PGQRLLFRFM (82 aa)) constitute a DNA-binding region (ETS). Glycyl lysine isopeptide (Lys-Gly) (interchain with G-Cter in SUMO2) cross-links involve residues Lys-403 and Lys-421.

Belongs to the ETS family. As to quaternary structure, can form homodimers or heterodimers with TEL2 or FLI1. Interacts with L3MBTL1 and HDAC9. In terms of processing, phosphorylation of Ser-257 by MAPK14 (p38) inhibits ETV6 transcriptional repression. In terms of tissue distribution, ubiquitous.

The protein resides in the nucleus. Transcriptional repressor; binds to the DNA sequence 5'-CCGGAAGT-3'. Plays a role in hematopoiesis and malignant transformation. In Homo sapiens (Human), this protein is Transcription factor ETV6 (ETV6).